The primary structure comprises 362 residues: Chalcone synthase A (362 aa).

Residue Cys-168 is part of the active site.

Belongs to the thiolase-like superfamily. Chalcone/stilbene synthases family.

The enzyme catalyses (E)-4-coumaroyl-CoA + 3 malonyl-CoA + 3 H(+) = 2',4,4',6'-tetrahydroxychalcone + 3 CO2 + 4 CoA. The protein operates within secondary metabolite biosynthesis; flavonoid biosynthesis. In terms of biological role, the primary product of this enzyme is 4,2',4',6'-tetrahydroxychalcone (also termed naringenin-chalcone or chalcone) which can under specific conditions spontaneously isomerize into naringenin. This is Chalcone synthase A (CHSA) from Ipomoea platensis (Morning glory).